Reading from the N-terminus, the 551-residue chain is UvrABC system protein C (551 aa).

The GIY-YIG domain maps to 12 to 87; that stretch reads EKPGVYIFKN…IFKHKPKYNI (76 aa). In terms of domain architecture, UVR spans 193 to 228; sequence EFVKDYIEQKMNYHSKMLDFENAAKYRDLLLSFEKL.

It belongs to the UvrC family. In terms of assembly, interacts with UvrB in an incision complex.

The protein resides in the cytoplasm. In terms of biological role, the UvrABC repair system catalyzes the recognition and processing of DNA lesions. UvrC both incises the 5' and 3' sides of the lesion. The N-terminal half is responsible for the 3' incision and the C-terminal half is responsible for the 5' incision. The sequence is that of UvrABC system protein C from Thermosipho africanus (strain TCF52B).